A 268-amino-acid chain; its full sequence is Tryptophan synthase alpha chain (268 aa).

Catalysis depends on proton acceptor residues Glu-49 and Asp-60.

It belongs to the TrpA family. Tetramer of two alpha and two beta chains.

The catalysed reaction is (1S,2R)-1-C-(indol-3-yl)glycerol 3-phosphate + L-serine = D-glyceraldehyde 3-phosphate + L-tryptophan + H2O. The protein operates within amino-acid biosynthesis; L-tryptophan biosynthesis; L-tryptophan from chorismate: step 5/5. The alpha subunit is responsible for the aldol cleavage of indoleglycerol phosphate to indole and glyceraldehyde 3-phosphate. The protein is Tryptophan synthase alpha chain of Pseudomonas paraeruginosa (strain DSM 24068 / PA7) (Pseudomonas aeruginosa (strain PA7)).